A 478-amino-acid polypeptide reads, in one-letter code: Putrescine oxidase (478 aa).

15 to 70 (RDVVVVGAGPAGLMAARTLVAAGRTVAVLEARDRVGGRTWSKTVDGAFLEIGGQWI) is a binding site for FAD.

Belongs to the flavin monoamine oxidase family. Requires FAD as cofactor.

It carries out the reaction putrescine + O2 + H2O = 4-aminobutanal + H2O2 + NH4(+). This Kocuria rosea (Deinococcus erythromyxa) protein is Putrescine oxidase (puo).